Here is a 72-residue protein sequence, read N- to C-terminus: MSKINVNVENVSGVQGFLFHTDGKESYGYRAFINGVEIGIKDIETVQGFQQIIPSINISKSDVEAIRKAMKK.

Homooctamer. Part of the PlyC holoenzyme, which is composed of 1 PLYCA and 8 PLYCB assembled into a ring structure.

Functionally, component of the endolysin PlyC that degrades the host peptidoglycans and participates with the holin protein in the sequential events which lead to the programmed host cell lysis releasing the mature viral particles. Once the holin has permeabilized the host cell membrane, the endolysin can reach the periplasm and breaking down the peptidoglycan layer. The small subunit PlyCB is responsible for the specific binding of the endolysin to the host cell-wall, probably to the rhamnose of group A streptococcal carbohydrates. PlyCB is essential for lytic activity, cell wall binding is a prerequisite for cell lysis. The sequence is that of Endolysin PlyC, small cell-wall binding subunit (orf9dod) from Streptococcus phage C1.